Here is a 117-residue protein sequence, read N- to C-terminus: uncharacterized protein (117 aa).

Belongs to the mimivirus R69 family.

This is an uncharacterized protein from Acanthamoeba polyphaga mimivirus (APMV).